A 419-amino-acid polypeptide reads, in one-letter code: UDP-N-acetylglucosamine 1-carboxyvinyltransferase (419 aa).

22–23 (KN) provides a ligand contact to phosphoenolpyruvate. Residue Arg-91 coordinates UDP-N-acetyl-alpha-D-glucosamine. The Proton donor role is filled by Cys-115. Cys-115 bears the 2-(S-cysteinyl)pyruvic acid O-phosphothioketal mark. UDP-N-acetyl-alpha-D-glucosamine is bound by residues 120-124 (RPVDL), 160-163 (KVSV), Asp-305, and Val-327.

This sequence belongs to the EPSP synthase family. MurA subfamily.

It is found in the cytoplasm. It catalyses the reaction phosphoenolpyruvate + UDP-N-acetyl-alpha-D-glucosamine = UDP-N-acetyl-3-O-(1-carboxyvinyl)-alpha-D-glucosamine + phosphate. The protein operates within cell wall biogenesis; peptidoglycan biosynthesis. In terms of biological role, cell wall formation. Adds enolpyruvyl to UDP-N-acetylglucosamine. In Escherichia fergusonii (strain ATCC 35469 / DSM 13698 / CCUG 18766 / IAM 14443 / JCM 21226 / LMG 7866 / NBRC 102419 / NCTC 12128 / CDC 0568-73), this protein is UDP-N-acetylglucosamine 1-carboxyvinyltransferase.